We begin with the raw amino-acid sequence, 304 residues long: E3 ubiquitin-protein ligase CHIP (304 aa).

A compositionally biased stretch (basic and acidic residues) spans 1–10 (MKGKEEKEGG). The tract at residues 1–30 (MKGKEEKEGGARLGTGGGGSPDKSPSAQEL) is disordered. Lys2 participates in a covalent cross-link: Glycyl lysine isopeptide (Lys-Gly) (interchain with G-Cter in ubiquitin). The span at 11 to 20 (ARLGTGGGGS) shows a compositional bias: gly residues. Residue Ser20 is modified to Phosphoserine. Lys23 participates in a covalent cross-link: Glycyl lysine isopeptide (Lys-Gly) (interchain with G-Cter in ubiquitin). Phosphoserine is present on residues Ser24 and Ser26. TPR repeat units lie at residues 27-60 (AQEL…NPLV), 61-94 (AVYY…DGQS), and 96-128 (KAHF…AKEQ). Residues 102 to 201 (GQCQLEMESY…GHIRAQQACI (100 aa)) are required for interaction with MAPK7. The segment at 143 to 197 (AKKKRWNSIEERRIHQESELHSYLTRLIAAERERELEECQRNHEGHEDDGHIRAQ) is required for interaction with and ubiquitination of MYOCD. Positions 144–198 (KKKRWNSIEERRIHQESELHSYLTRLIAAERERELEECQRNHEGHEDDGHIRAQQ) are required for interaction with FOXO1. The interval 144 to 304 (KKKRWNSIEE…ISENGWVEDY (161 aa)) is required for ubiquitination of FOXO1. At Ser150 the chain carries Phosphoserine. Residues Lys222 and Lys256 each participate in a glycyl lysine isopeptide (Lys-Gly) (interchain with G-Cter in ubiquitin) cross-link. One can recognise a U-box domain in the interval 227-301 (DIPDYLCGKI…DAFISENGWV (75 aa)). Ser274 carries the phosphoserine modification.

As to quaternary structure, homodimer. Interacts with BAG2, and with the E2 ubiquitin conjugating enzymes UBE2D1, UBE2D2 and UBE2D3. Detected in a ternary complex containing STUB1, HSPA1A and HSPBP1. Part of a complex composed of STUB1/CHIP, VCP/p97, CHRNA3, and UBXN2A that modulates the ubiquitination and endoplasmic reticulum-associated degradation (ERAD) of CHRNA3. Within the complex UBXN2A acts as a scaffold protein required for the interaction of CHRNA3 with VCP/p97, this interaction also inhibits CHRNA3 ubiquitination by STUB1/CHIP and subsequently ERAD. Interacts with MKKS. Interacts with DNAAF4. Interacts (via the U-box domain) with the UBE2V2-UBE2N heterodimer; the complex has a specific 'Lys-63'-linked polyubiquitination activity. Interacts (when monoubiquitinated) with ATXN3. Interacts with UBE2W. Interacts with DNAJB6. Interacts with FLCN and HSP90AA1. Interacts with HSP90. Interacts with UBE2N and UBE2V1. Interacts (via TPR repeats) with HSPA8 (via C-terminus). Interacts (via TPR repeats) with HSPA1A (via C-terminus). Interacts with the non-acetylated form of HSPA1A and HSPA1B. Interacts with SMAD3 and HSP90AB1. Interacts with UBE4B. Interacts with PRMT5. Interacts with MYOCD (via C-terminus). Interacts with FOXO1 (when phosphorylated on 'Ser-253'). Interacts with MAPK7/ERK5; the interaction is enhanced in the presence of IGF1 or MAP2K5 and promotes STUB1/CHIP E3 ligase activity. Interacts with and ubiquitinates ESR1; the interaction is promoted in the absence of estradiol (17-beta-estradiol/E2). Interacts with ESR2. Interacts with and ubiquitinates NFATC3; HSPA1A/HSP70 is required as a co-chaperone. In macrophages, interacts with PAQR3; the interaction promotes PPARG poylubiquitination and STUB1-mediated degradation. Component of the chaperone-assisted selective autophagy (CASA) complex consisting of BAG3, HSPA8/HSC70, HSPB8 and STUB1/CHIP. In terms of processing, auto-ubiquitinated; mediated by UBE2D1 and UBE2D2 and enhanced in the presence of MAP2K5. Monoubiquitinated at Lys-2 following cell stress by UBE2W, promoting the interaction with ATXN3. Expressed in the brain.

The protein resides in the cytoplasm. Its subcellular location is the nucleus. The protein localises to the mitochondrion. The catalysed reaction is S-ubiquitinyl-[E2 ubiquitin-conjugating enzyme]-L-cysteine + [acceptor protein]-L-lysine = [E2 ubiquitin-conjugating enzyme]-L-cysteine + N(6)-ubiquitinyl-[acceptor protein]-L-lysine.. It functions in the pathway protein modification; protein ubiquitination. E3 ubiquitin-protein ligase which targets misfolded chaperone substrates towards proteasomal degradation. Plays a role in the maintenance of mitochondrial morphology and promotes mitophagic removal of dysfunctional mitochondria; thereby acts as a protector against apoptosis in response to cellular stress. Negatively regulates vascular smooth muscle contraction, via degradation of the transcriptional activator MYOCD and subsequent loss of transcription of genes involved in vascular smooth muscle contraction. Promotes survival and proliferation of cardiac smooth muscle cells via ubiquitination and degradation of FOXO1, resulting in subsequent repression of FOXO1-mediated transcription of pro-apoptotic genes. Ubiquitinates ICER-type isoforms of CREM and targets them for proteasomal degradation, thereby acts as a positive effector of MAPK/ERK-mediated inhibition of apoptosis in cardiomyocytes. Inhibits lipopolysaccharide-induced apoptosis and hypertrophy in cardiomyocytes, via ubiquitination and subsequent proteasomal degradation of NFATC3. Collaborates with ATXN3 in the degradation of misfolded chaperone substrates: ATXN3 restricting the length of ubiquitin chain attached to STUB1/CHIP substrates and preventing further chain extension. Ubiquitinates NOS1 in concert with Hsp70 and Hsp40. Modulates the activity of several chaperone complexes, including Hsp70, Hsc70 and Hsp90. Ubiquitinates CHRNA3 targeting it for endoplasmic reticulum-associated degradation in cortical neurons, as part of the STUB1-VCP-UBXN2A complex. Ubiquitinates and promotes ESR1 proteasomal degradation in response to age-related circulating estradiol (17-beta-estradiol/E2) decline, thereby promotes neuronal apoptosis in response to ischemic reperfusion injury. Mediates transfer of non-canonical short ubiquitin chains to HSPA8 that have no effect on HSPA8 degradation. Mediates polyubiquitination of DNA polymerase beta (POLB) at 'Lys-41', 'Lys-61' and 'Lys-81', thereby playing a role in base-excision repair: catalyzes polyubiquitination by amplifying the HUWE1/ARF-BP1-dependent monoubiquitination and leading to POLB-degradation by the proteasome. Mediates polyubiquitination of CYP3A4. Ubiquitinates EPHA2 and may regulate the receptor stability and activity through proteasomal degradation. Acts as a co-chaperone for HSPA1A and HSPA1B chaperone proteins and promotes ubiquitin-mediated protein degradation. Negatively regulates the suppressive function of regulatory T-cells (Treg) during inflammation by mediating the ubiquitination and degradation of FOXP3 in a HSPA1A/B-dependent manner. Catalyzes monoubiquitination of SIRT6, preventing its degradation by the proteasome. Likely mediates polyubiquitination and down-regulates plasma membrane expression of PD-L1/CD274, an immune inhibitory ligand critical for immune tolerance to self and antitumor immunity. Negatively regulates TGF-beta signaling by modulating the basal level of SMAD3 via ubiquitin-mediated degradation. Plays a role in the degradation of TP53. Mediates ubiquitination of RIPK3 leading to its subsequent proteasome-dependent degradation. May regulate myosin assembly in striated muscles together with UBE4B and VCP/p97 by targeting myosin chaperone UNC45B for proteasomal degradation. Ubiquitinates PPARG in macrophages playing a role in M2 macrophages polarization and angiogenesis. In Mus musculus (Mouse), this protein is E3 ubiquitin-protein ligase CHIP.